The chain runs to 511 residues: Vicilin-like seed storage protein At2g28490 (511 aa).

The signal sequence occupies residues 1 to 27; the sequence is MEKNKRAIGFLLLVVLINGVMMTRSNG. Positions 54–81 are disordered; the sequence is GGGGGGAWGGEGEGGGEWGGGGEGGGGG. Cupin type-1 domains follow at residues 86 to 238 and 329 to 480; these read FMMR…PELQ and YNIY…ETMR. N-linked (GlcNAc...) asparagine glycans are attached at residues Asn-231, Asn-369, Asn-403, and Asn-464.

It belongs to the 7S seed storage protein family.

Functionally, seed storage protein. This is Vicilin-like seed storage protein At2g28490 from Arabidopsis thaliana (Mouse-ear cress).